The following is a 212-amino-acid chain: External core antigen (212 aa).

Positions 1 to 19 (MQLFHLCLIISCTCPTVQA) are cleaved as a signal peptide. The HBEAG stretch occupies residues 25–27 (GWL). The disordered stretch occupies residues 165 to 212 (NAPILSTLPETTVVRRRGRSPRRRTPSPRRRRSQSPRRRRSQSRESQC). A compositionally biased stretch (basic residues) spans 178–205 (VRRRGRSPRRRTPSPRRRRSQSPRRRRS). The stretch at 184 to 190 (SPRRRTP) is one 1; half-length repeat. Positions 184-206 (SPRRRTPSPRRRRSQSPRRRRSQ) are 3 X 8 AA repeats of S-P-R-R-R-R-S-Q. Residues 184 to 212 (SPRRRTPSPRRRRSQSPRRRRSQSRESQC) constitute a propeptide that is removed on maturation. 2 consecutive repeat copies span residues 191–198 (SPRRRRSQ) and 199–206 (SPRRRRSQ).

It belongs to the orthohepadnavirus precore antigen family. As to quaternary structure, homodimerizes. Phosphorylated. In terms of processing, cleaved by host furin.

The protein resides in the secreted. It is found in the host nucleus. Functionally, may regulate immune response to the intracellular capsid in acting as a T-cell tolerogen, by having an immunoregulatory effect which prevents destruction of infected cells by cytotoxic T-cells. This immune regulation may predispose to chronicity during perinatal infections and prevent severe liver injury during adult infections. The protein is External core antigen of Hepatitis B virus genotype D subtype ayw (isolate Italy/CI/1992) (HBV-D).